A 164-amino-acid chain; its full sequence is MASHTADADAKPDSDSQKLLNVLPVSLRLRTRPWWFPIQEVSNPLVLYMEAWVAERVIGTDQAEISEIEWMCQALLTVDSVNSGNLAEITIFGQPSAQTRMKNILLNMAAWHKENELQRAVKVKEVEEFLKIRASSILSKLSKKGLKLAGFPLPLEGRETQMES.

Residues 44–105 (PLVLYMEAWV…SAQTRMKNIL (62 aa)) form the KH; atypical domain.

The protein belongs to the KHDC1 family. Component of the subcortical maternal complex (SCMC), at least composed of NLRP5, KHDC3, OOEP, and TLE6. Within the complex, interacts with NLRP5, KHDC3 and TLE6. The SCMC may facilitate translocation of its components between the nuclear and cytoplasmic compartments. As part of the SCMC interacts with the SCMC-associated protein NLRP4F. Forms a scaffold complex with KHDC3/FILIA, and interacts with BLM and TRIM25 at DNA replication forks. As to expression, expressed in ovaries, where it is restricted to growing oocytes, with greatest levels in fully grown oocytes.

Its subcellular location is the cytoplasm. The protein localises to the nucleus. Functionally, component of the subcortical maternal complex (SCMC), a multiprotein complex that plays a key role in early embryonic development. The SCMC complex is a structural constituent of cytoplasmic lattices, which consist in fibrous structures found in the cytoplasm of oocytes and preimplantation embryos. They are required to store maternal proteins critical for embryonic development, such as proteins that control epigenetic reprogramming of the preimplantation embryo, and prevent their degradation or activation. As part of the OOEP-KHDC3 scaffold, recruits BLM and TRIM25 to DNA replication forks, thereby promoting the ubiquitination of BLM by TRIM25, enhancing BLM retainment at replication forks and therefore promoting stalled replication fork restart. Positively regulates the homologous recombination-mediated DNA double-strand break (DSB) repair pathway by regulating ATM activation and RAD51 recruitment to DSBs in oocytes. Thereby contributes to oocyte survival and the resumption and completion of meiosis. The chain is Oocyte-expressed protein homolog from Mus musculus (Mouse).